The following is a 178-amino-acid chain: Dual-action ribosomal maturation protein DarP (178 aa).

This sequence belongs to the DarP family.

The protein localises to the cytoplasm. Its function is as follows. Member of a network of 50S ribosomal subunit biogenesis factors which assembles along the 30S-50S interface, preventing incorrect 23S rRNA structures from forming. Promotes peptidyl transferase center (PTC) maturation. This Haemophilus influenzae (strain PittEE) protein is Dual-action ribosomal maturation protein DarP.